The chain runs to 345 residues: Phosphoribosylformylglycinamidine cyclo-ligase (345 aa).

Belongs to the AIR synthase family.

The protein resides in the cytoplasm. It carries out the reaction 2-formamido-N(1)-(5-O-phospho-beta-D-ribosyl)acetamidine + ATP = 5-amino-1-(5-phospho-beta-D-ribosyl)imidazole + ADP + phosphate + H(+). The protein operates within purine metabolism; IMP biosynthesis via de novo pathway; 5-amino-1-(5-phospho-D-ribosyl)imidazole from N(2)-formyl-N(1)-(5-phospho-D-ribosyl)glycinamide: step 2/2. This chain is Phosphoribosylformylglycinamidine cyclo-ligase, found in Pectobacterium atrosepticum (strain SCRI 1043 / ATCC BAA-672) (Erwinia carotovora subsp. atroseptica).